The primary structure comprises 109 residues: U-scoloptoxin(16)-Ssd1a (109 aa).

An N-terminal signal peptide occupies residues 1–23; the sequence is MTTSATVIIMVLCVGSLVIFSEG.

Contains 4 disulfide bonds. Expressed by the venom gland.

It localises to the secreted. This is U-scoloptoxin(16)-Ssd1a from Scolopendra dehaani (Thai centipede).